A 520-amino-acid chain; its full sequence is Mitogen-activated protein kinase kinase 3 (520 aa).

Position 69 is a phosphoserine (S69). Residues 83 to 339 enclose the Protein kinase domain; the sequence is MRVFGAIGSG…ADQLLSHPFI (257 aa). ATP contacts are provided by residues 89–97 and K112; that span reads IGSGASSVV. Residue D207 is the Proton acceptor of the active site. Phosphoserine is present on S235. A phosphothreonine mark is found at T241 and T245. Positions 366–516 constitute an NTF2 domain; the sequence is LADMLTIHYY…YFLAKQELYI (151 aa).

This sequence belongs to the protein kinase superfamily. STE Ser/Thr protein kinase family. MAP kinase kinase subfamily. In terms of assembly, interacts with MPK1, MPK2 and MPK7. Interacts with P.syringae type III effector HopF2. Interacts with MPK14. Binds to MAPKKK17 and MAPKKK18. Binds to MAPKKK20. Post-translationally, phosphorylation at Ser-235 and Thr-241 by MAP kinase kinase kinases positively regulates kinase activity. Phosphorylated by MAPKKK20. Mostly expressed in leaves, and, to a lower extent, in roots, seedlings, flower buds, flowers and siliques.

It is found in the nucleus. The protein localises to the cytoplasm. The catalysed reaction is L-seryl-[protein] + ATP = O-phospho-L-seryl-[protein] + ADP + H(+). The enzyme catalyses L-threonyl-[protein] + ATP = O-phospho-L-threonyl-[protein] + ADP + H(+). It catalyses the reaction L-tyrosyl-[protein] + ATP = O-phospho-L-tyrosyl-[protein] + ADP + H(+). Its function is as follows. MKK3-MPK6 module plays an important role in the jasmonate signal transduction pathway through the negative regulation of MYC2/JIN1 expression. Activates by phosphorylation the downstream MPK6, MPK7 and MPK8. MKK3-MPK7 module acts as a positive regulator of PR1 gene expression. MKK3-MPK8 module negatively regulates ROS accumulation through controlling expression of the RBOHD gene. Component of the abscisic acid (ABA) signaling pathway that may act as ABA signal transducer in the context of abiotic stresses. Activator of the C group MAP kinases. Activates MPK7 in response to ABA. Mitogen-activated protein kinase (MAPK) that is specifically regulated by MAPKKK20 and mediates signaling that regulates cortical microtubule functions. The sequence is that of Mitogen-activated protein kinase kinase 3 from Arabidopsis thaliana (Mouse-ear cress).